A 492-amino-acid polypeptide reads, in one-letter code: Glutamyl-tRNA(Gln) amidotransferase subunit A (492 aa).

Catalysis depends on charge relay system residues K81 and S156. The active-site Acyl-ester intermediate is the S180.

The protein belongs to the amidase family. GatA subfamily. Heterotrimer of A, B and C subunits.

The catalysed reaction is L-glutamyl-tRNA(Gln) + L-glutamine + ATP + H2O = L-glutaminyl-tRNA(Gln) + L-glutamate + ADP + phosphate + H(+). Allows the formation of correctly charged Gln-tRNA(Gln) through the transamidation of misacylated Glu-tRNA(Gln) in organisms which lack glutaminyl-tRNA synthetase. The reaction takes place in the presence of glutamine and ATP through an activated gamma-phospho-Glu-tRNA(Gln). The chain is Glutamyl-tRNA(Gln) amidotransferase subunit A from Rhodococcus erythropolis (strain PR4 / NBRC 100887).